A 385-amino-acid polypeptide reads, in one-letter code: Nonsense-mediated mRNA decay factor SMG9 (385 aa).

The disordered stretch occupies residues 1–32; that stretch reads MKKVEILKTSRPSSAGGAARPSTASPTHGAPK.

Belongs to the SMG9 family.

In terms of biological role, involved in nonsense-mediated decay (NMD) of mRNAs containing premature stop codons. Probable component of kinase complex containing smg-1 and recruited to stalled ribosomes. The protein is Nonsense-mediated mRNA decay factor SMG9 (smg-9) of Caenorhabditis elegans.